The primary structure comprises 276 residues: C-type lectin domain family 12 member B (276 aa).

Over 1-43 (MSEDMTYATLTFQDSVAAGNNQDRNNLRKRGYPAPSSIWRQAA) the chain is Cytoplasmic. Positions 5 to 10 (MTYATL) match the ITIM motif motif. Residue Y7 is modified to Phosphotyrosine. The helical; Signal-anchor for type II membrane protein transmembrane segment at 44–64 (LGLLTLCVMLLIGLVTLGIMF) threads the bilayer. At 65–276 (LQMSSEINSD…AALVKIEDLD (212 aa)) the chain is on the extracellular side. 3 N-linked (GlcNAc...) asparagine glycosylation sites follow: N91, N176, and N237. The 115-residue stretch at 150-264 (YQTSCYYFAV…CSAEISWICE (115 aa)) folds into the C-type lectin domain. 2 cysteine pairs are disulfide-bonded: C172-C263 and C242-C255.

In terms of assembly, homodimer. Interacts (via ITIM motif) with PTPN6. Interacts (via ITIM motif) with PTPN11; this interaction triggers dephosphorylation and activation of PTPN11.

Its subcellular location is the cell membrane. Inhibitory receptor postulated to negatively regulate immune and non-immune functions. Upon phosphorylation, recruits SH2 domain-containing PTPN6 and PTPN11 phosphatases to its ITIM motif and antagonizes activation signals. Although it inhibits KLRK1/NKG2D-mediated signaling, it does not bind known ligands of KLRK1/NKG2D and therefore is not its inhibitory counterpart. May limit activation of myeloid cell subsets in response to infection or tissue inflammation. May protect target cells against natural killer cell-mediated lysis. May negatively regulate cell cycle and differentiation of melanocytes via inactivation of STAT3. The chain is C-type lectin domain family 12 member B (CLEC12B) from Bos taurus (Bovine).